Reading from the N-terminus, the 231-residue chain is Nuclear transcription factor Y subunit C-9 (231 aa).

The tract at residues 211-231 (NPYMGQPMWQQQAPDQPDQEN) is disordered.

Belongs to the NFYC/HAP5 subunit family. In terms of assembly, heterotrimeric transcription factor composed of three components, NF-YA, NF-YB and NF-YC. Interacts with NFYA2, NFYB2, CO and RGA. Interacts with REF6 (via N-terminus). As to expression, ubiquitous. Present in etiolated seedlings.

Its subcellular location is the nucleus. Functionally, stimulates the transcription of various genes by recognizing and binding to a CCAAT motif in promoters. Interacts with REF6 to directly regulate SOC1 transcription in response to flowering signals from photoperiod and gibberellic acid pathways. The protein is Nuclear transcription factor Y subunit C-9 (NFYC9) of Arabidopsis thaliana (Mouse-ear cress).